The primary structure comprises 348 residues: Uroporphyrinogen decarboxylase (348 aa).

Substrate is bound by residues 27–31 (RQAGR), F46, D76, Y152, S207, and H320.

It belongs to the uroporphyrinogen decarboxylase family. In terms of assembly, homodimer.

It is found in the cytoplasm. It carries out the reaction uroporphyrinogen III + 4 H(+) = coproporphyrinogen III + 4 CO2. The protein operates within porphyrin-containing compound metabolism; protoporphyrin-IX biosynthesis; coproporphyrinogen-III from 5-aminolevulinate: step 4/4. In terms of biological role, catalyzes the decarboxylation of four acetate groups of uroporphyrinogen-III to yield coproporphyrinogen-III. This is Uroporphyrinogen decarboxylase from Bacillus cereus (strain B4264).